We begin with the raw amino-acid sequence, 255 residues long: Ribosomal RNA small subunit methyltransferase G 2 (255 aa).

Residues glycine 90, phenylalanine 95, and arginine 155 each coordinate S-adenosyl-L-methionine. Over residues 233-245 the composition is skewed to acidic residues; the sequence is EDEGEELLMDELS. Positions 233–255 are disordered; it reads EDEGEELLMDELSNEEKRRWAKY. Residues 246–255 show a composition bias toward basic and acidic residues; it reads NEEKRRWAKY.

The protein belongs to the methyltransferase superfamily. RNA methyltransferase RsmG family.

Its subcellular location is the cytoplasm. It catalyses the reaction guanosine(527) in 16S rRNA + S-adenosyl-L-methionine = N(7)-methylguanosine(527) in 16S rRNA + S-adenosyl-L-homocysteine. Its function is as follows. Specifically methylates the N7 position of guanine in position 527 of 16S rRNA. This Bdellovibrio bacteriovorus (strain ATCC 15356 / DSM 50701 / NCIMB 9529 / HD100) protein is Ribosomal RNA small subunit methyltransferase G 2.